The sequence spans 207 residues: Ribosomal RNA small subunit methyltransferase G (207 aa).

Residues Gly-76, Gln-81, 127-128 (VE), and Arg-141 contribute to the S-adenosyl-L-methionine site.

The protein belongs to the methyltransferase superfamily. RNA methyltransferase RsmG family.

Its subcellular location is the cytoplasm. The catalysed reaction is guanosine(527) in 16S rRNA + S-adenosyl-L-methionine = N(7)-methylguanosine(527) in 16S rRNA + S-adenosyl-L-homocysteine. Specifically methylates the N7 position of guanine in position 527 of 16S rRNA. The polypeptide is Ribosomal RNA small subunit methyltransferase G (Neisseria meningitidis serogroup A / serotype 4A (strain DSM 15465 / Z2491)).